A 616-amino-acid polypeptide reads, in one-letter code: Cytochrome c oxidase subunit 1 (616 aa).

Residues 28-48 (HLYLISGGFFFLLGGLEALFI) traverse the membrane as a helical segment. Residue H72 participates in Fe(II)-heme a binding. 6 helical membrane-spanning segments follow: residues 75-95 (TMIF…VVPL), 102-122 (VAFP…GLFL), 158-178 (GLQI…VTII), 198-218 (FVTS…LIFM), 243-263 (LFWV…FGIF), and 275-295 (LFGY…GFMV). Cu cation-binding residues include H249 and Y253. The 1'-histidyl-3'-tyrosine (His-Tyr) cross-link spans 249 to 253 (HPEVY). Cu cation contacts are provided by H298 and H299. Helical transmembrane passes span 303-323 (VGMG…IAVP), 349-369 (AVAF…LASA), 380-400 (FVVA…LLAG), 420-440 (ITFW…HFLG), 463-483 (ISTI…INIV), 553-573 (SSFL…GFTY), and 577-597 (AGWG…SMFL). H384 provides a ligand contact to Fe(II)-heme o. A heme a3-binding site is contributed by H384. H386 contacts Fe(II)-heme a.

This sequence belongs to the heme-copper respiratory oxidase family. Cu(2+) is required as a cofactor. It depends on heme as a cofactor.

The protein resides in the cell membrane. It carries out the reaction 4 Fe(II)-[cytochrome c] + O2 + 8 H(+)(in) = 4 Fe(III)-[cytochrome c] + 2 H2O + 4 H(+)(out). It participates in energy metabolism; oxidative phosphorylation. In terms of biological role, cytochrome c oxidase is the component of the respiratory chain that catalyzes the reduction of oxygen to water. Subunits 1-3 form the functional core of the enzyme complex. Co I is the catalytic subunit of the enzyme. Electrons originating in cytochrome c are transferred via the copper A center of subunit 2 and heme a of subunit 1 to the bimetallic center formed by heme a3 and copper B. This cytochrome c oxidase shows proton pump activity across the membrane in addition to the electron transfer. The sequence is that of Cytochrome c oxidase subunit 1 (ctaD) from Bacillus sp. (strain PS3).